A 364-amino-acid polypeptide reads, in one-letter code: Lysophosphatidic acid receptor 1 (364 aa).

The Extracellular portion of the chain corresponds to 1–50 (MAAISTSIPVISQPQFTAMNEPQCFYNESIAFFYNRSGKHLATEWNTVSK). Intrachain disulfides connect Cys24–Cys190 and Cys188–Cys195. 2 N-linked (GlcNAc...) asparagine glycosylation sites follow: Asn27 and Asn35. Residue Lys39 coordinates a 1-acyl-sn-glycero-3-phosphate. Residues 51-75 (LVMGLGITVCIFIMLANLLVMVAIY) form a helical membrane-spanning segment. The Cytoplasmic segment spans residues 76-83 (VNRRFHFP). The helical transmembrane segment at 84–107 (IYYLMANLAAADFFAGLAYFYLMF) threads the bilayer. Residues 108–121 (NTGPNTRRLTVSTW) lie on the Extracellular side of the membrane. A helical transmembrane segment spans residues 122 to 144 (LLRQGLIDTSLTASVANLLAIAI). Residue 124-129 (RQGLID) participates in a 1-acyl-sn-glycero-3-phosphate binding. Residues 145–163 (ERHITVFRMQLHTRMSNRR) lie on the Cytoplasmic side of the membrane. The chain crosses the membrane as a helical span at residues 164 to 184 (VVVVIVVIWTMAIVMGAIPSV). Over 185–204 (GWNCICDIENCSNMAPLYSD) the chain is Extracellular. The helical transmembrane segment at 205–225 (SYLVFWAIFNLVTFVVMVVLY) threads the bilayer. Position 210 (Trp210) interacts with a 1-acyl-sn-glycero-3-phosphate. The Cytoplasmic portion of the chain corresponds to 226–255 (AHIFGYVRQRTMRMSRHSSGPRRNRDTMMS). Residues 256-280 (LLKTVVIVLGAFIICWTPGLVLLLL) form a helical membrane-spanning segment. Residues 281–294 (DVCCPQCDVLAYEK) lie on the Extracellular side of the membrane. Cysteines 284 and 287 form a disulfide. The chain crosses the membrane as a helical span at residues 295–315 (FFLLLAEFNSAMNPIIYSYRD). The Cytoplasmic segment spans residues 316-364 (KEMSATFRQILCCQRSENPTGPTEGSDRSASSLNHTILAGVHSNDHSVV). Ser341 is modified (phosphoserine). Position 351 is a phosphothreonine (Thr351).

The protein belongs to the G-protein coupled receptor 1 family. Interacts with RALA and GRK2. Interacts with GNAQ and GNA13. Interacts with CD14; the interaction is enhanced by exposure to bacterial lipopolysaccharide (LPS). N-glycosylated. Expressed in many adult organs, including brain, heart, colon, small intestine, placenta, prostate, ovary, pancreas, testes, spleen, skeletal muscle, and kidney. Little or no expression in liver, lung, thymus, or peripheral blood leukocytes. Detected in lung fibroblasts from bronchoalveolar fluid from patients with idiopathic pulmonary fibrosis. Detected in bone marrow-derived mesenchymal stem cells.

It is found in the cell surface. It localises to the cell membrane. The protein localises to the endosome. Receptor for lysophosphatidic acid (LPA). Plays a role in the reorganization of the actin cytoskeleton, cell migration, differentiation and proliferation, and thereby contributes to the responses to tissue damage and infectious agents. Activates downstream signaling cascades via the G(i)/G(o), G(12)/G(13), and G(q) families of heteromeric G proteins. Signaling inhibits adenylyl cyclase activity and decreases cellular cAMP levels. Signaling triggers an increase of cytoplasmic Ca(2+) levels. Activates RALA; this leads to the activation of phospholipase C (PLC) and the formation of inositol 1,4,5-trisphosphate. Signaling mediates activation of down-stream MAP kinases. Contributes to the regulation of cell shape. Promotes Rho-dependent reorganization of the actin cytoskeleton in neuronal cells and neurite retraction. Promotes the activation of Rho and the formation of actin stress fibers. Promotes formation of lamellipodia at the leading edge of migrating cells via activation of RAC1. Through its function as LPA receptor, plays a role in chemotaxis and cell migration, including responses to injury and wounding. Plays a role in triggering inflammation in response to bacterial lipopolysaccharide (LPS) via its interaction with CD14. Promotes cell proliferation in response to LPA. Inhibits the intracellular ciliogenesis pathway in response to LPA and through AKT1 activation. Required for normal skeleton development. May play a role in osteoblast differentiation. Required for normal brain development. Required for normal proliferation, survival and maturation of newly formed neurons in the adult dentate gyrus. Plays a role in pain perception and in the initiation of neuropathic pain. This chain is Lysophosphatidic acid receptor 1 (LPAR1), found in Homo sapiens (Human).